Consider the following 299-residue polypeptide: Ribosomal RNA small subunit methyltransferase H (299 aa).

S-adenosyl-L-methionine is bound by residues 36 to 38 (GGH), Asp-55, Asp-103, and Gln-110. Composition is skewed to basic and acidic residues over residues 268 to 282 (KPVR…ENPR) and 289 to 299 (RAAERIEKGGD). The tract at residues 268-299 (KPVRPSEEEIRENPRARSGRLRAAERIEKGGD) is disordered.

Belongs to the methyltransferase superfamily. RsmH family.

The protein localises to the cytoplasm. It carries out the reaction cytidine(1402) in 16S rRNA + S-adenosyl-L-methionine = N(4)-methylcytidine(1402) in 16S rRNA + S-adenosyl-L-homocysteine + H(+). Specifically methylates the N4 position of cytidine in position 1402 (C1402) of 16S rRNA. This chain is Ribosomal RNA small subunit methyltransferase H, found in Thermotoga petrophila (strain ATCC BAA-488 / DSM 13995 / JCM 10881 / RKU-1).